The chain runs to 319 residues: Beta-ketoacyl-[acyl-carrier-protein] synthase III (319 aa).

Catalysis depends on residues C115 and H246. The ACP-binding stretch occupies residues 247–251 (QANLR). N276 is an active-site residue.

The protein belongs to the thiolase-like superfamily. FabH family. Homodimer.

The protein resides in the cytoplasm. It carries out the reaction malonyl-[ACP] + acetyl-CoA + H(+) = 3-oxobutanoyl-[ACP] + CO2 + CoA. The protein operates within lipid metabolism; fatty acid biosynthesis. Its function is as follows. Catalyzes the condensation reaction of fatty acid synthesis by the addition to an acyl acceptor of two carbons from malonyl-ACP. Catalyzes the first condensation reaction which initiates fatty acid synthesis and may therefore play a role in governing the total rate of fatty acid production. Possesses both acetoacetyl-ACP synthase and acetyl transacylase activities. Its substrate specificity determines the biosynthesis of branched-chain and/or straight-chain of fatty acids. The protein is Beta-ketoacyl-[acyl-carrier-protein] synthase III of Coxiella burnetii (strain RSA 493 / Nine Mile phase I).